Here is a 419-residue protein sequence, read N- to C-terminus: Synaptotagmin-1 (419 aa).

The Vesicular segment spans residues M1–P57. Residue N25 is glycosylated (N-linked (GlcNAc...) asparagine). Residues P58–C80 traverse the membrane as a helical segment. S-palmitoyl cysteine attachment occurs at residues C75, C76, C78, C80, and C83. At K81–K419 the chain is on the cytoplasmic side. The interval K108 to K139 is disordered. Positions Q117–K131 are enriched in acidic residues. At T126 the chain carries Phosphothreonine. Positions E133–N379 are phospholipid binding. Residues K139–R258 form the C2 1 domain. Positions 169, 170, and 176 each coordinate Ca(2+). A Phosphotyrosine modification is found at Y227. D228, F229, D230, S233, K234, and D236 together coordinate Ca(2+). A Phosphoserine modification is found at S262. The 134-residue stretch at K270–H403 folds into the C2 2 domain. Ca(2+) contacts are provided by D301 and D307. Residues S340 and S342 each carry the phosphoserine modification. Positions 361, 363, and 369 each coordinate Ca(2+).

This sequence belongs to the synaptotagmin family. In terms of assembly, homotetramer. Heterodimer; heterodimerizes with SYT2 in presence of calcium. Interacts with SCAMP5. Interacts with STON2. Forms a complex with SV2B, syntaxin 1 and SNAP25. Interacts with SV2A, SV2B and SV2C. Interacts with RIMS1. Interacts with PRRT2. Interacts with DNAJC5 in a phosphorylation-dependent manner. Interacts (via N-terminus) with RAB3A. Interacts with SYT12. Interacts with calmodulin. Interacts with DNM1 (via C-terminal proline-rich domain (PRD)); this interaction facilitates vesicle fission during clathrin-mediated endocytosis (CME). It depends on Ca(2+) as a cofactor. Post-translationally, glycosylated.

It is found in the cytoplasmic vesicle. The protein localises to the secretory vesicle membrane. Its subcellular location is the secretory vesicle. It localises to the synaptic vesicle membrane. The protein resides in the chromaffin granule membrane. It is found in the cytoplasm. Calcium sensor that participates in triggering neurotransmitter release at the synapse. May have a regulatory role in the membrane interactions during trafficking of synaptic vesicles at the active zone of the synapse. It binds acidic phospholipids with a specificity that requires the presence of both an acidic head group and a diacyl backbone. A Ca(2+)-dependent interaction between synaptotagmin and putative receptors for activated protein kinase C has also been reported. It can bind to at least three additional proteins in a Ca(2+)-independent manner; these are neurexins, syntaxin and AP2. Plays a role in dendrite formation by melanocytes. This chain is Synaptotagmin-1, found in Macaca fascicularis (Crab-eating macaque).